Reading from the N-terminus, the 1823-residue chain is Laminin subunit alpha-4 (1823 aa).

An N-terminal signal peptide occupies residues 1–24 (MALSSAWRSVLPLWLLWSAACSRA). O-linked (Xyl...) (chondroitin sulfate) serine glycosylation occurs at Ser-39. 12 disulfide bridges follow: Cys-82-Cys-91, Cys-84-Cys-98, Cys-101-Cys-110, Cys-113-Cys-129, Cys-132-Cys-146, Cys-134-Cys-155, Cys-157-Cys-166, Cys-169-Cys-184, Cys-187-Cys-202, Cys-189-Cys-209, Cys-212-Cys-221, and Cys-224-Cys-238. 3 consecutive Laminin EGF-like domains span residues 82–131 (CDCN…FCQP), 132–186 (CPCP…TCKK), and 187–240 (CDCS…NCAV). Asn-104 carries N-linked (GlcNAc...) asparagine glycosylation. Asn-215 carries N-linked (GlcNAc...) asparagine glycosylation. The Laminin EGF-like 4; truncated domain occupies 241–255 (CNCGGGPCDSVTGEC). Positions 256-832 (LEEGFEPPTG…AQTRSVASKI (577 aa)) are domain II and I. Asn-315 is a glycosylation site (N-linked (GlcNAc...) asparagine). A coiled-coil region spans residues 320–403 (LLKTKLSERE…KIQEINNKML (84 aa)). An N-linked (GlcNAc...) asparagine glycan is attached at Asn-465. Positions 473–528 (VVLEQLDDYNAKLSDLQEALDQALNYVRDAEDMNRATAARQRDHEKQQERVREQME) form a coiled coil. 6 N-linked (GlcNAc...) asparagine glycosylation sites follow: Asn-531, Asn-557, Asn-578, Asn-581, Asn-638, and Asn-646. The stretch at 581-614 (NLSHDLVQEAIDHAQDLQQEANELSRKLHSSDMN) forms a coiled coil. The stretch at 662–724 (IIYHKDESEN…AVKQLQAAER (63 aa)) forms a coiled coil. A Cell attachment site motif is present at residues 724–726 (RGD). N-linked (GlcNAc...) asparagine glycosylation is found at Asn-742, Asn-758, Asn-761, Asn-787, and Asn-810. The stretch at 777 to 806 (AVNSARDAVRNLTEVVPQLLDQLRTVEQKR) forms a coiled coil. 3 Laminin G-like domains span residues 833–1035 (QVSM…SVPC), 1047–1227 (AASY…GYGC), and 1234–1402 (SRRA…LYEC). A disulfide bridge links Cys-1005 with Cys-1035. Asn-1093 carries an N-linked (GlcNAc...) asparagine glycan. An intrachain disulfide couples Cys-1201 to Cys-1227. Residues Asn-1288 and Asn-1366 are each glycosylated (N-linked (GlcNAc...) asparagine). Cys-1370 and Cys-1402 are joined by a disulfide. A glycan (N-linked (GlcNAc...) asparagine) is linked at Asn-1418. The segment at 1419–1440 (LSKPKASQNKKGGKSKDAPSWD) is disordered. Laminin G-like domains lie at 1469 to 1640 (AYQY…VTPC) and 1647 to 1820 (TGTY…INSC). Disulfide bonds link Cys-1617–Cys-1640 and Cys-1792–Cys-1820.

In terms of assembly, laminin is a complex glycoprotein, consisting of three different polypeptide chains (alpha, beta, gamma), which are bound to each other by disulfide bonds into a cross-shaped molecule comprising one long and three short arms with globules at each end. Alpha-4 is a subunit of laminin-8 (laminin-411), laminin-9 (laminin-421) and laminin-14 (laminin-423). In terms of tissue distribution, detected in placenta (at protein level). Detected in fibroblasts and urine (at protein level). In adult, strong expression in heart, lung, ovary small and large intestines, placenta, liver; weak or no expression in skeletal muscle, kidney, pancreas, testis, prostate, brain. High expression in fetal lung and kidney. Expression in fetal and newborn tissues is observed in certain mesenchymal cells in tissues such as smooth muscle and dermis.

The protein resides in the secreted. Its subcellular location is the extracellular space. The protein localises to the extracellular matrix. It is found in the basement membrane. In terms of biological role, binding to cells via a high affinity receptor, laminin is thought to mediate the attachment, migration and organization of cells into tissues during embryonic development by interacting with other extracellular matrix components. The sequence is that of Laminin subunit alpha-4 (LAMA4) from Homo sapiens (Human).